A 78-amino-acid chain; its full sequence is MLVFLHAVFITVLILLLIGRLQLLERLLLNHSFNLKTVNDFNILYRSLAETRLLKVVLRVIFLVLLGFCCYRLLVTLM.

An N-terminal signal peptide occupies residues 1 to 23 (MLVFLHAVFITVLILLLIGRLQL). Topologically, residues 24–57 (LERLLLNHSFNLKTVNDFNILYRSLAETRLLKVV) are lumenal. The chain crosses the membrane as a helical span at residues 58 to 78 (LRVIFLVLLGFCCYRLLVTLM). The interval 59–65 (RVIFLVL) is interaction with PPP1CC/PP1-gamma.

The protein belongs to the coronaviruses ns7/ns7a protein family. Interacts with serine/threonine-protein phosphatase PPP1CC/PP1-gamma; this interaction; this interaction probably promotes EIF2S1/eIF-2alpha dephosphorylation.

The protein localises to the host membrane. Its function is as follows. Inhibits the integrated stress response (ISR) in the infected cell by promoting EIF2S1/eIF-2alpha dephosphorylation. Acts as a functional homolog of host PPP1R15A/GADD34 to recruit PP1 phosphatase and dephosphorylate host EIF2S1/eIF-2alpha. May function in the formation of membrane-bound replication complexes or in the assembly of the virus. This is Non-structural protein 7 from Porcine transmissible gastroenteritis coronavirus (strain Purdue) (TGEV).